The sequence spans 472 residues: Adenosylhomocysteinase (472 aa).

3 residues coordinate substrate: T61, D136, and E196. 197 to 199 contacts NAD(+); sequence TTT. K226 and D230 together coordinate substrate. Residues N231, 260–265, E283, N318, 339–341, and N384 each bind NAD(+); these read GYGDVG and IGH.

This sequence belongs to the adenosylhomocysteinase family. It depends on NAD(+) as a cofactor.

It is found in the cytoplasm. It catalyses the reaction S-adenosyl-L-homocysteine + H2O = L-homocysteine + adenosine. It functions in the pathway amino-acid biosynthesis; L-homocysteine biosynthesis; L-homocysteine from S-adenosyl-L-homocysteine: step 1/1. Its function is as follows. May play a key role in the regulation of the intracellular concentration of adenosylhomocysteine. The sequence is that of Adenosylhomocysteinase from Cupriavidus necator (strain ATCC 17699 / DSM 428 / KCTC 22496 / NCIMB 10442 / H16 / Stanier 337) (Ralstonia eutropha).